Here is a 318-residue protein sequence, read N- to C-terminus: Olfactory receptor 2A2 (318 aa).

At 1–24 (MEGNQTWITDITLLGFQVGPALAI) the chain is on the extracellular side. N4 carries N-linked (GlcNAc...) asparagine glycosylation. A helical transmembrane segment spans residues 25–48 (LLCGLFSVFYTLTLLGNGVIFGII). Residues 49 to 56 (CLDSKLHT) are Cytoplasmic-facing. A helical transmembrane segment spans residues 57–78 (PMYFFLSHLAIIDMSYASNNVP). At 79-99 (KMLANLMNQKRTISFVPCIMQ) the chain is on the extracellular side. The chain crosses the membrane as a helical span at residues 100–119 (TFLYLAFAVTECLILVVMSY). Over 120–138 (DRYVAICHPFQYTVIMSWR) the chain is Cytoplasmic. A helical membrane pass occupies residues 139–157 (VCTILVLTSWSCGFALSLV). The Extracellular segment spans residues 158-194 (HEILLLRLPFCGPRDVNHLFCEILSVLKLACADTWVN). Residues 195–218 (QVVIFATCVFVLVGPLSLILVSYM) traverse the membrane as a helical segment. Residues 219–235 (HILGAILKIQTKEGRIK) are Cytoplasmic-facing. A helical transmembrane segment spans residues 236-258 (AFSTCSSHLCVVGLFFGIAMVVY). Residues 259 to 271 (MVPDSNQREEQEK) are Extracellular-facing. The helical transmembrane segment at 272–291 (MLSLFHSVFNPMLNPLIYSL) threads the bilayer. Over 292-310 (RNAQLKGALHRALQRKRSM) the chain is Cytoplasmic.

The protein belongs to the G-protein coupled receptor 1 family.

The protein resides in the cell membrane. In terms of biological role, odorant receptor. This chain is Olfactory receptor 2A2 (OR2A2), found in Homo sapiens (Human).